The chain runs to 445 residues: Phosphoglucosamine mutase (445 aa).

Ser-102 (phosphoserine intermediate) is an active-site residue. Ser-102, Asp-241, Asp-243, and Asp-245 together coordinate Mg(2+). Ser-102 is subject to Phosphoserine.

The protein belongs to the phosphohexose mutase family. Mg(2+) is required as a cofactor. Post-translationally, activated by phosphorylation.

It catalyses the reaction alpha-D-glucosamine 1-phosphate = D-glucosamine 6-phosphate. Functionally, catalyzes the conversion of glucosamine-6-phosphate to glucosamine-1-phosphate. This Escherichia coli O81 (strain ED1a) protein is Phosphoglucosamine mutase.